Consider the following 277-residue polypeptide: Putative hydroxypyruvate isomerase (277 aa).

Active-site proton donor/acceptor residues include Glu150 and Glu249.

The protein belongs to the hyi family.

It carries out the reaction 3-hydroxypyruvate = 2-hydroxy-3-oxopropanoate. Functionally, catalyzes the reversible isomerization between hydroxypyruvate and 2-hydroxy-3-oxopropanoate (also termed tartronate semialdehyde). In Mus musculus (Mouse), this protein is Putative hydroxypyruvate isomerase (Hyi).